The following is a 169-amino-acid chain: Peptide deformylase (169 aa).

Residues C91 and H133 each contribute to the Fe cation site. The active site involves E134. Fe cation is bound at residue H137.

This sequence belongs to the polypeptide deformylase family. Fe(2+) is required as a cofactor.

The catalysed reaction is N-terminal N-formyl-L-methionyl-[peptide] + H2O = N-terminal L-methionyl-[peptide] + formate. Its function is as follows. Removes the formyl group from the N-terminal Met of newly synthesized proteins. Requires at least a dipeptide for an efficient rate of reaction. N-terminal L-methionine is a prerequisite for activity but the enzyme has broad specificity at other positions. This is Peptide deformylase from Klebsiella pneumoniae subsp. pneumoniae (strain ATCC 700721 / MGH 78578).